The primary structure comprises 282 residues: MKLLRYGPSGQEKPGILDAAGRIRDLSAHVPDLAGDVLSDAGLARLRAIDPATLPLVSGEPRIGACVGHVGKFIGIGLNYADHAAEAGMPVPKEPVVFGKWTSSICGPNDGIDIPKGSVKTDWEVELGVVIGAKCKDVDEARALDYVAGYCVVNDVSEREWQIERGGQWDKGKGFDTFGPIGPWLVTRDEVPDPQRLDLWLEIDGHRYQNGNTRTMVFTVAQLVAYLSTCMTLQPGDVITTGTPPGVGMGVKPSPVFLKAGQTVRLGIEGLGEQLQRTRDAQ.

Residues E124, E126, and D155 each contribute to the Mg(2+) site.

This sequence belongs to the FAH family. The cofactor is Mg(2+).

The sequence is that of Putative hydrolase Bcen_5340 from Burkholderia orbicola (strain AU 1054).